The chain runs to 332 residues: GTP 3',8-cyclase (332 aa).

One can recognise a Radical SAM core domain in the interval 9–234 (TFGRRISYLR…DSDHRTGGPS (226 aa)). A GTP-binding site is contributed by arginine 18. The [4Fe-4S] cluster site is built by cysteine 25 and cysteine 29. S-adenosyl-L-methionine is bound at residue tyrosine 31. Position 32 (cysteine 32) interacts with [4Fe-4S] cluster. Residue arginine 67 participates in GTP binding. Residue glycine 71 participates in S-adenosyl-L-methionine binding. A GTP-binding site is contributed by threonine 100. Serine 124 is an S-adenosyl-L-methionine binding site. A GTP-binding site is contributed by lysine 160. Methionine 194 contacts S-adenosyl-L-methionine. Cysteine 257 and cysteine 260 together coordinate [4Fe-4S] cluster. 262–264 (RVR) contributes to the GTP binding site. [4Fe-4S] cluster is bound at residue cysteine 274.

Belongs to the radical SAM superfamily. MoaA family. In terms of assembly, monomer and homodimer. Requires [4Fe-4S] cluster as cofactor.

The catalysed reaction is GTP + AH2 + S-adenosyl-L-methionine = (8S)-3',8-cyclo-7,8-dihydroguanosine 5'-triphosphate + 5'-deoxyadenosine + L-methionine + A + H(+). The protein operates within cofactor biosynthesis; molybdopterin biosynthesis. Functionally, catalyzes the cyclization of GTP to (8S)-3',8-cyclo-7,8-dihydroguanosine 5'-triphosphate. This chain is GTP 3',8-cyclase, found in Erythrobacter litoralis (strain HTCC2594).